Consider the following 417-residue polypeptide: Fructose-1,6-bisphosphatase 1, chloroplastic (417 aa).

A chloroplast-targeting transit peptide spans 1–59; that stretch reads MAATAATTTSSHLLLSSSRHVASSSQPSILSPRSLFSNNGKRAPTGVRNHQYASGVRCM. The segment covering 24 to 35 has biased composition (low complexity); the sequence is SSQPSILSPRSL. The interval 24 to 48 is disordered; it reads SSQPSILSPRSLFSNNGKRAPTGVR. Position 60 is an N-acetylalanine (A60). 5 residues coordinate Mg(2+): E138, E167, D188, L190, and D191. 191–194 contacts substrate; the sequence is DGSS. A disulfide bridge links C233 with C238. The substrate site is built by N297, Y329, Y347, Y349, and K359. E365 contributes to the Mg(2+) binding site.

This sequence belongs to the FBPase class 1 family. In terms of assembly, homotetramer. Mg(2+) serves as cofactor.

The protein localises to the plastid. The protein resides in the chloroplast stroma. It catalyses the reaction beta-D-fructose 1,6-bisphosphate + H2O = beta-D-fructose 6-phosphate + phosphate. It participates in carbohydrate biosynthesis; Calvin cycle. Functionally, catalyzes the irreversible reaction from fructose-1,6-bisphosphate to fructose-6-phosphate and inorganic phosphate, to regenerate the primary CO(2) acceptor molecule, ribulose-1,5-bisphosphate. Involved in the regulation of photosynthetic electron flow and sucrose synthesis. Its activity is critical for normal plant development and important for the regulation of a wide range of metabolic processes. The polypeptide is Fructose-1,6-bisphosphatase 1, chloroplastic (Arabidopsis thaliana (Mouse-ear cress)).